We begin with the raw amino-acid sequence, 156 residues long: Small ribosomal subunit protein uS7 (156 aa).

This sequence belongs to the universal ribosomal protein uS7 family. In terms of assembly, part of the 30S ribosomal subunit. Contacts proteins S9 and S11.

In terms of biological role, one of the primary rRNA binding proteins, it binds directly to 16S rRNA where it nucleates assembly of the head domain of the 30S subunit. Is located at the subunit interface close to the decoding center, probably blocks exit of the E-site tRNA. This is Small ribosomal subunit protein uS7 from Histophilus somni (strain 129Pt) (Haemophilus somnus).